A 381-amino-acid polypeptide reads, in one-letter code: Chaperone protein DnaJ (381 aa).

The J domain occupies D5–G70. The CR-type zinc finger occupies G140–D218. Positions 153, 156, 170, 173, 192, 195, 206, and 209 each coordinate Zn(2+). CXXCXGXG motif repeat units follow at residues C153–G160, C170–G177, C192–G199, and C206–G213.

This sequence belongs to the DnaJ family. In terms of assembly, homodimer. Zn(2+) is required as a cofactor.

It localises to the cytoplasm. Functionally, participates actively in the response to hyperosmotic and heat shock by preventing the aggregation of stress-denatured proteins and by disaggregating proteins, also in an autonomous, DnaK-independent fashion. Unfolded proteins bind initially to DnaJ; upon interaction with the DnaJ-bound protein, DnaK hydrolyzes its bound ATP, resulting in the formation of a stable complex. GrpE releases ADP from DnaK; ATP binding to DnaK triggers the release of the substrate protein, thus completing the reaction cycle. Several rounds of ATP-dependent interactions between DnaJ, DnaK and GrpE are required for fully efficient folding. Also involved, together with DnaK and GrpE, in the DNA replication of plasmids through activation of initiation proteins. The sequence is that of Chaperone protein DnaJ from Ruegeria pomeroyi (strain ATCC 700808 / DSM 15171 / DSS-3) (Silicibacter pomeroyi).